The sequence spans 257 residues: Ribonuclease HII (257 aa).

The RNase H type-2 domain occupies 72–257; the sequence is TYIAGIDEVG…FAPIKDMIQK (186 aa). 3 residues coordinate a divalent metal cation: D78, E79, and D170.

It belongs to the RNase HII family. It depends on Mn(2+) as a cofactor. The cofactor is Mg(2+).

It localises to the cytoplasm. The catalysed reaction is Endonucleolytic cleavage to 5'-phosphomonoester.. Functionally, endonuclease that specifically degrades the RNA of RNA-DNA hybrids. The chain is Ribonuclease HII from Bacillus cereus (strain G9842).